A 229-amino-acid chain; its full sequence is Large ribosomal subunit protein uL1 (229 aa).

It belongs to the universal ribosomal protein uL1 family. Part of the 50S ribosomal subunit.

Its function is as follows. Binds directly to 23S rRNA. The L1 stalk is quite mobile in the ribosome, and is involved in E site tRNA release. Protein L1 is also a translational repressor protein, it controls the translation of the L11 operon by binding to its mRNA. The protein is Large ribosomal subunit protein uL1 of Streptococcus equi subsp. zooepidemicus (strain MGCS10565).